A 108-amino-acid polypeptide reads, in one-letter code: uncharacterized protein (108 aa).

2 consecutive transmembrane segments (helical) span residues 5 to 27 (TVYG…QLEI) and 83 to 105 (IFLM…LNIF).

Its subcellular location is the membrane. This is an uncharacterized protein from Schizosaccharomyces pombe (strain 972 / ATCC 24843) (Fission yeast).